We begin with the raw amino-acid sequence, 150 residues long: Deoxyuridine 5'-triphosphate nucleotidohydrolase (150 aa).

Residues 65–67 (RSG), Asn-78, and 82–84 (TID) contribute to the substrate site. The interval 130–150 (LSDTERGEGGFGHTGVASKAE) is disordered.

It belongs to the dUTPase family. It depends on Mg(2+) as a cofactor.

The enzyme catalyses dUTP + H2O = dUMP + diphosphate + H(+). The protein operates within pyrimidine metabolism; dUMP biosynthesis; dUMP from dCTP (dUTP route): step 2/2. Its function is as follows. This enzyme is involved in nucleotide metabolism: it produces dUMP, the immediate precursor of thymidine nucleotides and it decreases the intracellular concentration of dUTP so that uracil cannot be incorporated into DNA. The protein is Deoxyuridine 5'-triphosphate nucleotidohydrolase of Chlorobaculum parvum (strain DSM 263 / NCIMB 8327) (Chlorobium vibrioforme subsp. thiosulfatophilum).